Consider the following 420-residue polypeptide: Calreticulin (420 aa).

Positions 1–18 (MKWGVVAVLATLVVAASA) are cleaved as a signal peptide. Cysteine 106 and cysteine 140 form a disulfide bridge. The an alpha-D-glucoside site is built by tyrosine 110, lysine 112, tyrosine 131, and aspartate 138. 7 consecutive repeat copies span residues 194–205 (VASGSLYEDWDM), 213–224 (DPKASKPEDWDE), 230–241 (DPEDKKPEGWDD), 248–259 (DKDAKKPEDWDD), 263–273 (GTWEPPMIPNP), 277–287 (GEWKAKMIKNP), and 291–301 (GIWVAPDIDNP). The segment at 194–259 (VASGSLYEDW…DAKKPEDWDD (66 aa)) is 4 X approximate repeats. Residues 210 to 220 (TIKDPKASKPE) show a composition bias toward basic and acidic residues. The segment at 210-272 (TIKDPKASKP…GTWEPPMIPN (63 aa)) is disordered. Over residues 221-230 (DWDEREEIAD) the composition is skewed to acidic residues. Residues 263–301 (GTWEPPMIPNPEYKGEWKAKMIKNPAYKGIWVAPDIDNP) are 3 X approximate repeats. Glutamate 321 is an an alpha-D-glucoside binding site. Positions 357-376 (EEKAMFDKVKKEEDEKKAKD) are enriched in basic and acidic residues. Residues 357–420 (EEKAMFDKVK…EEEESGHDEL (64 aa)) form a disordered region. 2 stretches are compositionally biased toward acidic residues: residues 385-398 (EAAE…EDKE) and 411-420 (EEEESGHDEL). A Prevents secretion from ER motif is present at residues 417 to 420 (HDEL).

Belongs to the calreticulin family.

The protein resides in the endoplasmic reticulum lumen. Its function is as follows. Molecular calcium-binding chaperone promoting folding, oligomeric assembly and quality control in the ER via the calreticulin/calnexin cycle. This lectin may interact transiently with almost all of the monoglucosylated glycoproteins that are synthesized in the ER. This is Calreticulin from Chlamydomonas reinhardtii (Chlamydomonas smithii).